The following is a 381-amino-acid chain: Cytochrome b (381 aa).

4 helical membrane passes run 34–54 (FGSL…FLAM), 78–99 (WLIR…YLHI), 114–134 (WNIG…GYVL), and 179–199 (FFAF…IHLL). Heme b is bound by residues His84 and His98. 2 residues coordinate heme b: His183 and His197. His202 contributes to the a ubiquinone binding site. 4 consecutive transmembrane segments (helical) span residues 227–247 (YKDI…TLFI), 289–309 (LGGV…PLLQ), 321–341 (MTQI…WIGG), and 348–368 (FIMV…IIIP).

It belongs to the cytochrome b family. As to quaternary structure, the cytochrome bc1 complex contains 3 respiratory subunits (MT-CYB, CYC1 and UQCRFS1), 2 core proteins (UQCRC1 and UQCRC2) and probably 6 low-molecular weight proteins. Requires heme b as cofactor.

It localises to the mitochondrion inner membrane. Functionally, component of the ubiquinol-cytochrome c reductase complex (complex III or cytochrome b-c1 complex) that is part of the mitochondrial respiratory chain. The b-c1 complex mediates electron transfer from ubiquinol to cytochrome c. Contributes to the generation of a proton gradient across the mitochondrial membrane that is then used for ATP synthesis. The chain is Cytochrome b (mt-cyb) from Galeocerdo cuvier (Tiger shark).